Consider the following 375-residue polypeptide: D-alanine--D-alanine ligase (375 aa).

The ATP-grasp domain occupies 145-348 (KRLLRDADLE…YPALITRLIE (204 aa)). 175–230 (ITYLGSSLFVKPANQGSSVGVSKVINRISFDQALALAFCFDDKVLVESAINGRELE) is a binding site for ATP. The Mg(2+) site is built by aspartate 302, glutamate 315, and asparagine 317.

The protein belongs to the D-alanine--D-alanine ligase family. The cofactor is Mg(2+). It depends on Mn(2+) as a cofactor.

The protein localises to the cytoplasm. The enzyme catalyses 2 D-alanine + ATP = D-alanyl-D-alanine + ADP + phosphate + H(+). Its pathway is cell wall biogenesis; peptidoglycan biosynthesis. Its function is as follows. Cell wall formation. The protein is D-alanine--D-alanine ligase of Baumannia cicadellinicola subsp. Homalodisca coagulata.